The primary structure comprises 613 residues: Autophagy-related protein 22-2 (613 aa).

The interval 1 to 28 is disordered; the sequence is MVLNSTPPASPGAEAQQRPPRYPGEDTA. A helical transmembrane segment spans residues 41 to 61; that stretch reads YGIAAEVFAVCGVGSFLPLTL. The span at 80-96 shows a compositional bias: polar residues; sequence GSSSPSTAPGNGTTTAT. The disordered stretch occupies residues 80–99; that stretch reads GSSSPSTAPGNGTTTATLRR. An N-linked (GlcNAc...) asparagine glycan is attached at asparagine 90. Transmembrane regions (helical) follow at residues 120–140, 155–177, and 189–209; these read SFAM…LISF, LAFG…PVYI, and CLGS…ANDP. Residues 216–257 form a disordered region; it reads KEEGEELSPVNSSGEFARSEDLDEENVRDSDDHFTTGHGLKT. Residue asparagine 226 is glycosylated (N-linked (GlcNAc...) asparagine). Basic and acidic residues predominate over residues 232–250; sequence ARSEDLDEENVRDSDDHFT. 4 helical membrane-spanning segments follow: residues 278–298, 307–327, 382–402, and 418–438; these read VGLG…MLFA, ISGT…WFSF, VIVF…VSGT, and VGLL…LWPV. A glycan (N-linked (GlcNAc...) asparagine) is linked at asparagine 448. Helical transmembrane passes span 453-473, 488-510, 522-544, and 553-573; these read LCIA…IPLF, FPLG…SFFG, YALY…GMLI, and GFFF…MVNA. The tract at residues 592–613 is disordered; it reads GEHASEYGGPSEEAEGLLARDI.

The protein belongs to the ATG22 family.

It is found in the vacuole membrane. Vacuolar effluxer which mediate the efflux of amino acids resulting from autophagic degradation. The release of autophagic amino acids allows the maintenance of protein synthesis and viability during nitrogen starvation. In Neosartorya fischeri (strain ATCC 1020 / DSM 3700 / CBS 544.65 / FGSC A1164 / JCM 1740 / NRRL 181 / WB 181) (Aspergillus fischerianus), this protein is Autophagy-related protein 22-2 (atg22-2).